The following is a 207-amino-acid chain: Ion-translocating oxidoreductase complex subunit G (207 aa).

Residues 11–31 (GILLGFIALLCTIISAGIFFL) traverse the membrane as a helical segment. FMN phosphoryl threonine is present on Thr-175.

This sequence belongs to the RnfG family. The complex is composed of six subunits: RnfA, RnfB, RnfC, RnfD, RnfE and RnfG. Requires FMN as cofactor.

It localises to the cell inner membrane. Functionally, part of a membrane-bound complex that couples electron transfer with translocation of ions across the membrane. This is Ion-translocating oxidoreductase complex subunit G from Haemophilus influenzae (strain ATCC 51907 / DSM 11121 / KW20 / Rd).